A 484-amino-acid chain; its full sequence is ATP synthase subunit beta (484 aa).

The tract at residues 104–123 (ERGPIGSKQTMPIHADAPPF) is disordered. Residue 156-163 (GGAGVGKT) coordinates ATP.

The protein belongs to the ATPase alpha/beta chains family. In terms of assembly, F-type ATPases have 2 components, CF(1) - the catalytic core - and CF(0) - the membrane proton channel. CF(1) has five subunits: alpha(3), beta(3), gamma(1), delta(1), epsilon(1). CF(0) has three main subunits: a(1), b(2) and c(9-12). The alpha and beta chains form an alternating ring which encloses part of the gamma chain. CF(1) is attached to CF(0) by a central stalk formed by the gamma and epsilon chains, while a peripheral stalk is formed by the delta and b chains.

It localises to the cell inner membrane. It carries out the reaction ATP + H2O + 4 H(+)(in) = ADP + phosphate + 5 H(+)(out). Produces ATP from ADP in the presence of a proton gradient across the membrane. The catalytic sites are hosted primarily by the beta subunits. This Zymomonas mobilis subsp. mobilis (strain ATCC 31821 / ZM4 / CP4) protein is ATP synthase subunit beta.